The sequence spans 652 residues: DNA ligase (652 aa).

NAD(+)-binding positions include Asp29 to Asp33, Ser78 to Leu79, and Glu107. Catalysis depends on Lys109, which acts as the N6-AMP-lysine intermediate. Residues Arg130, Glu164, Lys278, and Lys302 each coordinate NAD(+). Residues Cys395, Cys398, Cys413, and Cys418 each contribute to the Zn(2+) site. In terms of domain architecture, BRCT spans Val577–Leu652.

Belongs to the NAD-dependent DNA ligase family. LigA subfamily. It depends on Mg(2+) as a cofactor. Requires Mn(2+) as cofactor.

The catalysed reaction is NAD(+) + (deoxyribonucleotide)n-3'-hydroxyl + 5'-phospho-(deoxyribonucleotide)m = (deoxyribonucleotide)n+m + AMP + beta-nicotinamide D-nucleotide.. In terms of biological role, DNA ligase that catalyzes the formation of phosphodiester linkages between 5'-phosphoryl and 3'-hydroxyl groups in double-stranded DNA using NAD as a coenzyme and as the energy source for the reaction. It is essential for DNA replication and repair of damaged DNA. This Streptococcus pneumoniae (strain JJA) protein is DNA ligase.